The sequence spans 274 residues: 4-diphosphocytidyl-2-C-methyl-D-erythritol kinase (274 aa).

Residue lysine 8 is part of the active site. Residue proline 94–alanine 104 coordinates ATP. The active site involves aspartate 136.

It belongs to the GHMP kinase family. IspE subfamily.

The enzyme catalyses 4-CDP-2-C-methyl-D-erythritol + ATP = 4-CDP-2-C-methyl-D-erythritol 2-phosphate + ADP + H(+). It functions in the pathway isoprenoid biosynthesis; isopentenyl diphosphate biosynthesis via DXP pathway; isopentenyl diphosphate from 1-deoxy-D-xylulose 5-phosphate: step 3/6. In terms of biological role, catalyzes the phosphorylation of the position 2 hydroxy group of 4-diphosphocytidyl-2C-methyl-D-erythritol. This chain is 4-diphosphocytidyl-2-C-methyl-D-erythritol kinase, found in Bacteroides fragilis (strain YCH46).